The chain runs to 126 residues: Aspartate 1-decarboxylase (126 aa).

The Schiff-base intermediate with substrate; via pyruvic acid role is filled by Ser25. Position 25 is a pyruvic acid (Ser) (Ser25). Thr57 is a substrate binding site. The active-site Proton donor is the Tyr58. 73–75 (GGA) serves as a coordination point for substrate.

This sequence belongs to the PanD family. In terms of assembly, heterooctamer of four alpha and four beta subunits. Pyruvate serves as cofactor. In terms of processing, is synthesized initially as an inactive proenzyme, which is activated by self-cleavage at a specific serine bond to produce a beta-subunit with a hydroxyl group at its C-terminus and an alpha-subunit with a pyruvoyl group at its N-terminus.

The protein localises to the cytoplasm. The enzyme catalyses L-aspartate + H(+) = beta-alanine + CO2. The protein operates within cofactor biosynthesis; (R)-pantothenate biosynthesis; beta-alanine from L-aspartate: step 1/1. Functionally, catalyzes the pyruvoyl-dependent decarboxylation of aspartate to produce beta-alanine. This is Aspartate 1-decarboxylase from Xylella fastidiosa (strain 9a5c).